The primary structure comprises 366 residues: Ribonuclease P protein subunit drpp30 (366 aa).

The segment at 265–366 is disordered; it reads EDTQPTNNNI…DIDNNKRKRE (102 aa). The span at 275-290 shows a compositional bias: basic and acidic residues; the sequence is PHEKHINKESTGKETI. 2 stretches are compositionally biased toward low complexity: residues 291-324 and 333-351; these read PKPT…TPSI and TAKS…AQKQ. Residues 352 to 366 are compositionally biased toward basic and acidic residues; sequence GKMDIDIDNNKRKRE.

The protein belongs to the eukaryotic/archaeal RNase P protein component 3 family.

The protein resides in the nucleus. The enzyme catalyses Endonucleolytic cleavage of RNA, removing 5'-extranucleotides from tRNA precursor.. Component of ribonuclease P, a protein complex that generates mature tRNA molecules by cleaving their 5'-ends. The chain is Ribonuclease P protein subunit drpp30 (drpp30) from Dictyostelium discoideum (Social amoeba).